Here is a 318-residue protein sequence, read N- to C-terminus: MSVVVYAPASIGNVSVGFDVLGAAVSPIDGSLLGDRVEVAAGEQPFTLKCVGDFVAKLPVEQEENIVYHCWLVFARELDKKNIELKPVSMTLEKNMPIGSGLGSSACSVVAALDALNRFHNLPLNEVELLALMGEMEAKISGSLHYDNVAPCYLGGLQFMVQELGIISQPVPCFDDWYWVMAYPGIKVPTAEARAILPSQYRRQDVIAHGRYLGGFIHACHSQQPELAAKMVKDVVAEPYRERLLPGFSNARQYALEAGALASGISGSGPTMFSVCNDLEVAKRIARWLEDNYVQNDEGFVHVCRLDSTGSKVTGSEL.

97 to 107 (PIGSGLGSSAC) lines the ATP pocket.

It belongs to the GHMP kinase family. Homoserine kinase subfamily.

The protein resides in the cytoplasm. The catalysed reaction is L-homoserine + ATP = O-phospho-L-homoserine + ADP + H(+). Its pathway is amino-acid biosynthesis; L-threonine biosynthesis; L-threonine from L-aspartate: step 4/5. Catalyzes the ATP-dependent phosphorylation of L-homoserine to L-homoserine phosphate. This Photobacterium profundum (strain SS9) protein is Homoserine kinase.